The chain runs to 269 residues: Shikimate dehydrogenase (NADP(+)) (269 aa).

Shikimate-binding positions include 17–19 (SKS) and Thr64. Lys68 (proton acceptor) is an active-site residue. Residue Asp80 coordinates NADP(+). 2 residues coordinate shikimate: Asn89 and Asp105. NADP(+)-binding positions include 130–134 (GAGGA), 154–159 (NRTHAK), and Met213. Tyr215 lines the shikimate pocket. Gly237 provides a ligand contact to NADP(+).

It belongs to the shikimate dehydrogenase family. In terms of assembly, homodimer.

It carries out the reaction shikimate + NADP(+) = 3-dehydroshikimate + NADPH + H(+). It participates in metabolic intermediate biosynthesis; chorismate biosynthesis; chorismate from D-erythrose 4-phosphate and phosphoenolpyruvate: step 4/7. Functionally, involved in the biosynthesis of the chorismate, which leads to the biosynthesis of aromatic amino acids. Catalyzes the reversible NADPH linked reduction of 3-dehydroshikimate (DHSA) to yield shikimate (SA). The protein is Shikimate dehydrogenase (NADP(+)) of Neisseria polysaccharea.